The sequence spans 389 residues: Aminomethyltransferase (389 aa).

The protein belongs to the GcvT family. The glycine cleavage system is composed of four proteins: P, T, L and H.

The enzyme catalyses N(6)-[(R)-S(8)-aminomethyldihydrolipoyl]-L-lysyl-[protein] + (6S)-5,6,7,8-tetrahydrofolate = N(6)-[(R)-dihydrolipoyl]-L-lysyl-[protein] + (6R)-5,10-methylene-5,6,7,8-tetrahydrofolate + NH4(+). The glycine cleavage system catalyzes the degradation of glycine. The sequence is that of Aminomethyltransferase from Corynebacterium jeikeium (strain K411).